A 291-amino-acid polypeptide reads, in one-letter code: Serine hydrolase BPHL (291 aa).

Positions 1-37 are cleaved as a signal peptide; the sequence is MVAVLGGRGVLRLRLLLSALKPGIHVPRAGPAAAFGT. Positions 62-181 constitute an AB hydrolase-1 domain; it reads AVLLLPGMLG…DSMIYEGIRD (120 aa). N6-acetyllysine is present on residues Lys-86 and Lys-119. Residue Lys-126 is modified to N6-acetyllysine; alternate. At Lys-126 the chain carries N6-succinyllysine; alternate. The Nucleophile role is filled by Ser-139. Position 184 is an N6-succinyllysine (Lys-184). At Lys-191 the chain carries N6-acetyllysine; alternate. An N6-succinyllysine; alternate modification is found at Lys-191. An N6-acetyllysine modification is found at Lys-217. Asp-221 provides a ligand contact to Mg(2+). An N6-acetyllysine modification is found at Lys-243. The active-site Charge relay system is the Asp-244. N6-acetyllysine; alternate occurs at positions 260 and 271. Lys-260 and Lys-271 each carry N6-succinyllysine; alternate. His-272 functions as the Charge relay system in the catalytic mechanism.

This sequence belongs to the AB hydrolase superfamily. Lipase family. Monomer. May also form homodimers. As to expression, expressed at high levels in liver and kidney and lower levels in heart, intestine and skeletal muscle.

It is found in the mitochondrion. The enzyme catalyses L-homocysteine thiolactone + H2O = L-homocysteine + H(+). It carries out the reaction valacyclovir + H2O = acyclovir + L-valine + H(+). Specific alpha-amino acid ester serine hydrolase that prefers small, hydrophobic, and aromatic side chains and does not have a stringent requirement for the leaving group other than preferring a primary alcohol. Has homocysteine-thiolactonase activity (in vitro) and may play a significant role in the detoxification of homocysteine thiolactone in vivo. Catalyzes the hydrolytic activation of amino acid ester prodrugs of nucleoside analogs such as valacyclovir and valganciclovir, converting them into their active forms (acyclovir and ganciclovir). The protein is Serine hydrolase BPHL (BPHL) of Homo sapiens (Human).